The sequence spans 311 residues: MQNYKYDKAIVAESKNGGSPALNNNPRKGGSKRVLLICLDLFCLFMAGLPFIIIETSTIKPYHRGFYCNDESIKYPQKTGETINDAVLTAVGIVIAILAIITGEFYRIYYLKEKSRSTIQNPYVAALYKQVGCFLFGCAISQSFTDIAKVSIGRLRPHFLNVCNPDFSQINCSVGYIQNYRCRGEDSKVQEARKSFFSGHASFSMYTMLYLVLYLQARFTWRGARLLRPLLQFTLIMMAFYTGLSRVSDHKHHPSDVLAGFAQGALVACCIVFFVSDLFKTKTTLSLPPSAIRKDMLSPVDIDRSNHHNMV.

The Cytoplasmic segment spans residues 1-33 (MQNYKYDKAIVAESKNGGSPALNNNPRKGGSKR). The residue at position 19 (serine 19) is a Phosphoserine. The helical transmembrane segment at 34–54 (VLLICLDLFCLFMAGLPFIII) threads the bilayer. The Extracellular segment spans residues 55 to 85 (ETSTIKPYHRGFYCNDESIKYPQKTGETIND). A helical transmembrane segment spans residues 86-106 (AVLTAVGIVIAILAIITGEFY). Over 107 to 123 (RIYYLKEKSRSTIQNPY) the chain is Cytoplasmic. The Dityrosine basolateral targeting motif signature appears at 109–110 (YY). A helical transmembrane segment spans residues 124 to 144 (VAALYKQVGCFLFGCAISQSF). Residues 145–194 (TDIAKVSIGRLRPHFLNVCNPDFSQINCSVGYIQNYRCRGEDSKVQEARK) lie on the Extracellular side of the membrane. Positions 149–157 (KVSIGRLRP) are phosphatase sequence motif I. Asparagine 171 is a glycosylation site (N-linked (GlcNAc...) asparagine). The Integrin-binding motif signature appears at 183-185 (RGE). The chain crosses the membrane as a helical span at residues 195–215 (SFFSGHASFSMYTMLYLVLYL). The phosphatase sequence motif II stretch occupies residues 197–200 (FSGH). Histidine 200 serves as the catalytic Proton donors. The Cytoplasmic portion of the chain corresponds to 216-226 (QARFTWRGARL). A helical transmembrane segment spans residues 227–244 (LRPLLQFTLIMMAFYTGL). The tract at residues 245-256 (SRVSDHKHHPSD) is phosphatase sequence motif III. The Extracellular portion of the chain corresponds to 245–258 (SRVSDHKHHPSDVL). Residue histidine 252 is the Nucleophile of the active site. The helical transmembrane segment at 259–279 (AGFAQGALVACCIVFFVSDLF) threads the bilayer. The tract at residues 276 to 311 (SDLFKTKTTLSLPPSAIRKDMLSPVDIDRSNHHNMV) is mediates interaction with CTNND1. At 280–311 (KTKTTLSLPPSAIRKDMLSPVDIDRSNHHNMV) the chain is on the cytoplasmic side.

It belongs to the PA-phosphatase related phosphoesterase family. Forms functional homodimers and homooligomers that are not required for substrate recognition and catalytic activity. Can also form heterooligomers with other PLPP2 and PLPP3. Interacts with CTNND1; negatively regulates the PLPP3-mediated stabilization of beta-catenin/CTNNB1. N-glycosylated. Contains high-mannose oligosaccharides.

It localises to the cell membrane. The protein resides in the basolateral cell membrane. Its subcellular location is the endoplasmic reticulum membrane. It is found in the endoplasmic reticulum-Golgi intermediate compartment membrane. The protein localises to the golgi apparatus membrane. It localises to the golgi apparatus. The protein resides in the trans-Golgi network membrane. Its subcellular location is the membrane raft. It catalyses the reaction a 1,2-diacyl-sn-glycero-3-phosphate + H2O = a 1,2-diacyl-sn-glycerol + phosphate. The catalysed reaction is 1,2-dihexadecanoyl-sn-glycero-3-phosphate + H2O = 1,2-dihexadecanoyl-sn-glycerol + phosphate. The enzyme catalyses 1,2-di-(9Z-octadecenoyl)-sn-glycero-3-phosphate + H2O = 1,2-di-(9Z-octadecenoyl)-sn-glycerol + phosphate. It carries out the reaction a monoacyl-sn-glycero-3-phosphate + H2O = a monoacylglycerol + phosphate. It catalyses the reaction (9Z)-octadecenoyl-sn-glycero-3-phosphate + H2O = (9Z-octadecenoyl)-glycerol + phosphate. The catalysed reaction is sphing-4-enine 1-phosphate + H2O = sphing-4-enine + phosphate. The enzyme catalyses an N-acylsphing-4-enine 1-phosphate + H2O = an N-acylsphing-4-enine + phosphate. It carries out the reaction N-(octanoyl)-sphing-4-enine-1-phosphate + H2O = N-octanoylsphing-4-enine + phosphate. It catalyses the reaction N-(9Z-octadecenoyl)-ethanolamine phosphate + H2O = N-(9Z-octadecenoyl) ethanolamine + phosphate. The protein operates within lipid metabolism; phospholipid metabolism. Magnesium-independent phospholipid phosphatase. Insensitive to N-ethylmaleimide. Inhibited by sphingosine, zinc ions and modestly by propanolol. In terms of biological role, magnesium-independent phospholipid phosphatase of the plasma membrane that catalyzes the dephosphorylation of a variety of glycerolipid and sphingolipid phosphate esters including phosphatidate/PA, lysophosphatidate/LPA, diacylglycerol pyrophosphate/DGPP, sphingosine 1-phosphate/S1P and ceramide 1-phosphate/C1P. Also acts on N-oleoyl ethanolamine phosphate/N-(9Z-octadecenoyl)-ethanolamine phosphate, a potential physiological compound. Has both an extracellular and an intracellular phosphatase activity, allowing the hydrolysis and the cellular uptake of these bioactive lipid mediators from the milieu, regulating signal transduction in different cellular processes. Through the dephosphorylation of extracellular sphingosine-1-phosphate and the regulation of its extra- and intracellular availability, plays a role in vascular homeostasis, regulating endothelial cell migration, adhesion, survival, proliferation and the production of pro-inflammatory cytokines. By maintaining the appropriate levels of this lipid in the cerebellum, also ensure its proper development and function. Through its intracellular lipid phosphatase activity may act in early compartments of the secretory pathway, regulating the formation of Golgi to endoplasmic reticulum retrograde transport carriers. Functionally, independently of this phosphatase activity may also function in the Wnt signaling pathway and the stabilization of beta-catenin/CTNNB1, thereby regulating cell proliferation, migration and differentiation in angiogenesis or yet in tumor growth. Also plays a role in integrin-mediated cell-cell adhesion in angiogenesis. The protein is Phospholipid phosphatase 3 of Bos taurus (Bovine).